The sequence spans 199 residues: Recombination protein RecR (199 aa).

Residues 56-71 form a C4-type zinc finger; sequence CRSCFNVAQSELCRIC. One can recognise a Toprim domain in the interval 79-174; the sequence is ALICVVEEPK…RVTRLASGLP (96 aa).

The protein belongs to the RecR family.

In terms of biological role, may play a role in DNA repair. It seems to be involved in an RecBC-independent recombinational process of DNA repair. It may act with RecF and RecO. The chain is Recombination protein RecR from Frankia alni (strain DSM 45986 / CECT 9034 / ACN14a).